The chain runs to 31 residues: Mu-conotoxin SmIIIA (31 aa).

A propeptide spanning residues 1–6 (PLFDKR) is cleaved from the precursor. Residue glutamine 7 is modified to Pyrrolidone carboxylic acid. Disulfide bonds link cysteine 9/cysteine 21, cysteine 10/cysteine 27, and cysteine 16/cysteine 28. Cysteine 28 is modified (cysteine amide).

It belongs to the conotoxin M superfamily. In terms of processing, smIIIA' is a putative isoform where the N-terminal AA is missing. As to expression, expressed by the venom duct.

The protein localises to the secreted. Its function is as follows. Mu-conotoxins block voltage-gated sodium channels (Nav). This toxin blocks rNav1.5/SCN5A (IC(50) is 1.3 uM), rNav1.6/SCN8A (IC(50) is 160 nM), rNav1.7/SCN9A (IC(50) is 1.3 uM), rNav1.1/SCN1A (K(d) is 3.8 nM), rNav1.2/SCN2A (K(d) is 1.3 nM), rNav1.4/SCN4A (K(d) is 0.22 nM), rNav1.6/SCN8A (K(d) is 69 nM), and rNav1.7/SCN9A (K(d) is 260 nM). This toxin is very potent but weakly discriminating among sodium channels. The block of these channels is modified when beta-subunits are coexpressed with alpha subunits. Hence, blocks of channels containing beta-1 and beta-3 subunits are more potent (compared to channels without beta subunits), whereas blocks of channels containing beta-2 and beta-4 subunits are less potent (compared to channels without beta subunits). In Conus stercusmuscarum (Fly-specked cone), this protein is Mu-conotoxin SmIIIA.